The chain runs to 447 residues: Argininosuccinate synthase (447 aa).

ATP contacts are provided by residues 17-25 (AFSGGLDTS) and Ala-43. Tyr-99 serves as a coordination point for L-citrulline. Positions 129 and 131 each coordinate ATP. The L-aspartate site is built by Thr-131, Asn-135, and Asp-136. Position 135 (Asn-135) interacts with L-citrulline. Asp-136 lines the ATP pocket. L-citrulline contacts are provided by Arg-139 and Ser-192. Asp-194 lines the ATP pocket. The L-citrulline site is built by Thr-201, Glu-203, and Glu-280.

The protein belongs to the argininosuccinate synthase family. Type 2 subfamily. As to quaternary structure, homotetramer.

Its subcellular location is the cytoplasm. It catalyses the reaction L-citrulline + L-aspartate + ATP = 2-(N(omega)-L-arginino)succinate + AMP + diphosphate + H(+). It functions in the pathway amino-acid biosynthesis; L-arginine biosynthesis; L-arginine from L-ornithine and carbamoyl phosphate: step 2/3. In Escherichia coli O9:H4 (strain HS), this protein is Argininosuccinate synthase.